The following is a 309-amino-acid chain: Calponin-2 (309 aa).

Position 2 is an N-acetylserine (Ser-2). Lys-8 and Lys-25 each carry N6-acetyllysine. The Calponin-homology (CH) domain occupies 28–132 (PQKEAELRTW…SLLALAGKAK (105 aa)). Ser-138 bears the Phosphoserine mark. Calponin-like repeat units follow at residues 166-191 (IGLQMGTNKCASQSGMTAYGTRRHLY), 206-231 (ISLQMGTNKCASQVGMTAPGTRRHIY), and 245-269 (MSLQMGYTQGANQSGQVFGLGRQIY). The tract at residues 283–309 (APSGTGDCPDPGEVPEYPPYYQEEAGY) is disordered.

The protein belongs to the calponin family. Heart and smooth muscle.

In terms of biological role, thin filament-associated protein that is implicated in the regulation and modulation of smooth muscle contraction. It is capable of binding to actin, calmodulin and tropomyosin. The interaction of calponin with actin inhibits the actomyosin Mg-ATPase activity. The chain is Calponin-2 (CNN2) from Homo sapiens (Human).